Consider the following 180-residue polypeptide: MTDYQNDDDGFVSKSQRKRDMDALQDLGRELVDLSKDTLKKMQLPEDLLTAVLDYKRFTANGALRRQMQYIGKLMRDVDPEPIREYLKVLKGESSEHIAWQHLLERWREKLMADDKALSDFLAAFPEGDPQQLRTLMRNARKELQDNKPPKAYRQLFQEIKALIPEPGKPRLWQKDEDEE.

The protein belongs to the DarP family.

It localises to the cytoplasm. Its function is as follows. Member of a network of 50S ribosomal subunit biogenesis factors which assembles along the 30S-50S interface, preventing incorrect 23S rRNA structures from forming. Promotes peptidyl transferase center (PTC) maturation. The sequence is that of Dual-action ribosomal maturation protein DarP from Chromobacterium violaceum (strain ATCC 12472 / DSM 30191 / JCM 1249 / CCUG 213 / NBRC 12614 / NCIMB 9131 / NCTC 9757 / MK).